The following is a 333-amino-acid chain: Nucleoid-associated protein (333 aa).

The protein belongs to the YejK family.

The protein resides in the cytoplasm. Its subcellular location is the nucleoid. This is Nucleoid-associated protein from Metapseudomonas resinovorans (Pseudomonas resinovorans).